A 316-amino-acid polypeptide reads, in one-letter code: Apolipoprotein E (316 aa).

An N-terminal signal peptide occupies residues 1–18 (MKALWAVLVVTLLAGCLA). A run of 8 repeats spans residues 76-97 (VLMEDTMTELKAYKKELEEQLG), 98-119 (PMAEETRARLAKEVQAAQSRLG), 120-141 (ADMEDLRNRLGQYRNEVQTMLG), 142-163 (QSTEELRARLSTHLRKLRKRLM), 164-185 (RDAEDLQKRLAVYKAGAREGAE), 186-207 (RGVGAIRERLGPLVEQGRQRTA), 208-229 (NLGAGAGKPLQDRAQALGARIR), and 230-251 (GRLEEVGNQARDRLEEVREQME). The segment at 76–251 (VLMEDTMTEL…RLEEVREQME (176 aa)) is 8 X 22 AA approximate tandem repeats. Methionine 139 carries the methionine sulfoxide modification. Serine 143 carries the post-translational modification Phosphoserine. Residues 154-164 (HLRKLRKRLMR) are LDL and other lipoprotein receptors binding. 158 to 161 (LRKR) provides a ligand contact to heparin. Positions 206-286 (TANLGAGAGK…GWFEPLVEDM (81 aa)) are lipid-binding and lipoprotein association. Heparin is bound at residue 225-232 (GARIRGRL). A homooligomerization region spans residues 262 to 316 (QQMRLQAEIFQARLKGWFEPLVEDMQRQWANLVEKIQASVAANPIPPSSVPQESQ). Residues 274-286 (RLKGWFEPLVEDM) form a specificity for association with VLDL region.

Belongs to the apolipoprotein A1/A4/E family. As to quaternary structure, homotetramer. May interact with ABCA1; functionally associated with ABCA1 in the biogenesis of HDLs. May interact with APP/A4 amyloid-beta peptide; the interaction is extremely stable in vitro but its physiological significance is unclear. May interact with MAPT. May interact with MAP2. In the cerebrospinal fluid, interacts with secreted SORL1. Interacts with PMEL; this allows the loading of PMEL luminal fragment on ILVs to induce fibril nucleation. APOE exists as multiple glycosylated and sialylated glycoforms within cells and in plasma. The extent of glycosylation and sialylation are tissue and context specific. Post-translationally, glycated in plasma VLDL. In terms of processing, phosphorylated by FAM20C in the extracellular medium.

Its subcellular location is the secreted. It is found in the extracellular space. The protein localises to the extracellular matrix. The protein resides in the extracellular vesicle. It localises to the endosome. Its subcellular location is the multivesicular body. Functionally, APOE is an apolipoprotein, a protein associating with lipid particles, that mainly functions in lipoprotein-mediated lipid transport between organs via the plasma and interstitial fluids. APOE is a core component of plasma lipoproteins and is involved in their production, conversion and clearance. Apolipoproteins are amphipathic molecules that interact both with lipids of the lipoprotein particle core and the aqueous environment of the plasma. As such, APOE associates with chylomicrons, chylomicron remnants, very low density lipoproteins (VLDL) and intermediate density lipoproteins (IDL) but shows a preferential binding to high-density lipoproteins (HDL). It also binds a wide range of cellular receptors including the LDL receptor/LDLR, the LDL receptor-related proteins LRP1, LRP2 and LRP8 and the very low-density lipoprotein receptor/VLDLR that mediate the cellular uptake of the APOE-containing lipoprotein particles. Finally, APOE also has a heparin-binding activity and binds heparan-sulfate proteoglycans on the surface of cells, a property that supports the capture and the receptor-mediated uptake of APOE-containing lipoproteins by cells. A main function of APOE is to mediate lipoprotein clearance through the uptake of chylomicrons, VLDLs, and HDLs by hepatocytes. APOE is also involved in the biosynthesis by the liver of VLDLs as well as their uptake by peripheral tissues ensuring the delivery of triglycerides and energy storage in muscle, heart and adipose tissues. By participating in the lipoprotein-mediated distribution of lipids among tissues, APOE plays a critical role in plasma and tissues lipid homeostasis. APOE is also involved in two steps of reverse cholesterol transport, the HDLs-mediated transport of cholesterol from peripheral tissues to the liver, and thereby plays an important role in cholesterol homeostasis. First, it is functionally associated with ABCA1 in the biogenesis of HDLs in tissues. Second, it is enriched in circulating HDLs and mediates their uptake by hepatocytes. APOE also plays an important role in lipid transport in the central nervous system, regulating neuron survival and sprouting. The sequence is that of Apolipoprotein E (Apoe) from Onychomys torridus (Southern grasshopper mouse).